A 310-amino-acid polypeptide reads, in one-letter code: Aspartate carbamoyltransferase catalytic subunit (310 aa).

Carbamoyl phosphate is bound by residues Arg57 and Thr58. Residue Lys86 coordinates L-aspartate. The carbamoyl phosphate site is built by Arg107, His135, and Gln138. Residues Arg168 and Arg229 each contribute to the L-aspartate site. Leu268 and Pro269 together coordinate carbamoyl phosphate.

It belongs to the aspartate/ornithine carbamoyltransferase superfamily. ATCase family. As to quaternary structure, heterooligomer of catalytic and regulatory chains.

The enzyme catalyses carbamoyl phosphate + L-aspartate = N-carbamoyl-L-aspartate + phosphate + H(+). It participates in pyrimidine metabolism; UMP biosynthesis via de novo pathway; (S)-dihydroorotate from bicarbonate: step 2/3. Functionally, catalyzes the condensation of carbamoyl phosphate and aspartate to form carbamoyl aspartate and inorganic phosphate, the committed step in the de novo pyrimidine nucleotide biosynthesis pathway. In Thermococcus onnurineus (strain NA1), this protein is Aspartate carbamoyltransferase catalytic subunit.